Reading from the N-terminus, the 130-residue chain is Anti-adapter protein IraD (130 aa).

Belongs to the GpW/Gp25 family. IraD subfamily. As to quaternary structure, interacts with RssB.

It localises to the cytoplasm. Functionally, inhibits RpoS proteolysis by regulating RssB activity, thereby increasing the stability of the sigma stress factor RpoS during oxidative stress. Its effect on RpoS stability is due to its interaction with RssB, which probably blocks the interaction of RssB with RpoS, and the consequent delivery of the RssB-RpoS complex to the ClpXP protein degradation pathway. The sequence is that of Anti-adapter protein IraD from Escherichia coli O45:K1 (strain S88 / ExPEC).